We begin with the raw amino-acid sequence, 997 residues long: MLGLLRRLFDNNEREIARYYKQVVEPVNRLEAEVEKLPDLAAAYRELKEKHEKGASLDELLPMAFALTRESAKRYLGMRHFDVQLIGGAVLHEGKIAEMKTGEGKTLVATLAVALNALTGKGVHVVTVNDYLARRDAEWMGPVYRGLGLSVGVIQHASTPAERRKAYLADVTYVTNSELGFDYLRDNMAISPDQLVLRHDHPLHYAIIDEVDSILIDEARTPLIISGPAEKATDLYYKMAEIAKKLERGLPAEPGVRKEPTGDYTVEEKNRSVHLTLQGIAKAEKLLGIEGLFSPENMELAHMLIQAIRAKELYHRDRDYIVQDGQVIIVDEFTGRLMPGRRYGEGLHQAIEAKEGVRIERENQTLATITYQNFFRLYEKRAGMTGTAKTEEKEFQEIYGMDVVVVPTNRPVVRKDFPDVVYRTEKGKFYAVVEEIAEKYERGQPVLVGTISIEKSERLSQMLKEPRLYLPRLEMRLELFKKASQKQQGPEWERLRKLLERPAQLKDEDLAPFEGLIPPKGNLRTAWEGLKRAVHTLAVLRQGIPHQVLNAKHHAREAEIVAQAGRSKTVTIATNMAGRGTDIKLGGNPEYLAAALLEKEGFDRYEWKVELFIKKMVAGKEEEARALAQELGIREELLERIREIREECKQDEERVRALGGLFIIGTERHESRRIDNQLRGRAGRQGDPGGSRFYVSFDDDLMRLFASDRVIAMLDRMGFDDSEPIEHPMVTRSIERAQKRVEDRNFAIRKQLLQFDDVLSRQREVIYAQRRLILLGKDEEVKEAAIGMVEETVASLAENFLNPEVHPEDWDLEGLKATLLDTAPQLQDFPFAELRALKAEEAVERLVEAALKAYEAREAELSPPLMRAVERFVILNVVDNAWKEHLHNLDVLRQGIFLRGYGQKDPFQEYKIEATRLFNEMVAFIKSEVAKFLFRLKVEAEPVRPVREAPYVPVPEAKPEPSEVFGVERKRATPPPQPGLSRAERRRLMRQEKKRKK.

Residues Q84, 102-106, and D582 each bind ATP; that span reads GEGKT. A disordered region spans residues 950-997; the sequence is PYVPVPEAKPEPSEVFGVERKRATPPPQPGLSRAERRRLMRQEKKRKK. Over residues 957 to 971 the composition is skewed to basic and acidic residues; that stretch reads AKPEPSEVFGVERKR. Positions 984–997 are enriched in basic residues; it reads ERRRLMRQEKKRKK.

It belongs to the SecA family. As to quaternary structure, monomer and homodimer. Part of the essential Sec protein translocation apparatus which comprises SecA, SecYEG and auxiliary proteins SecDF. Other proteins may also be involved.

The protein resides in the cell inner membrane. The protein localises to the cytoplasm. The catalysed reaction is ATP + H2O + cellular proteinSide 1 = ADP + phosphate + cellular proteinSide 2.. Functionally, part of the Sec protein translocase complex. Interacts with the SecYEG preprotein conducting channel. Has a central role in coupling the hydrolysis of ATP to the transfer of proteins into and across the cell membrane, serving as an ATP-driven molecular motor driving the stepwise translocation of polypeptide chains across the membrane. This Thermus thermophilus (strain ATCC BAA-163 / DSM 7039 / HB27) protein is Protein translocase subunit SecA.